Reading from the N-terminus, the 218-residue chain is Protein-L-isoaspartate O-methyltransferase (218 aa).

Residue Ser-63 is part of the active site.

This sequence belongs to the methyltransferase superfamily. L-isoaspartyl/D-aspartyl protein methyltransferase family.

Its subcellular location is the cytoplasm. It catalyses the reaction [protein]-L-isoaspartate + S-adenosyl-L-methionine = [protein]-L-isoaspartate alpha-methyl ester + S-adenosyl-L-homocysteine. Catalyzes the methyl esterification of L-isoaspartyl residues in peptides and proteins that result from spontaneous decomposition of normal L-aspartyl and L-asparaginyl residues. It plays a role in the repair and/or degradation of damaged proteins. This is Protein-L-isoaspartate O-methyltransferase from Syntrophus aciditrophicus (strain SB).